Consider the following 667-residue polypeptide: Leucine zipper putative tumor suppressor 2 (667 aa).

Over residues 1–25 (MAIVQTLPVPLEPAPEAATAQQAPA) the composition is skewed to low complexity. Disordered stretches follow at residues 1–132 (MAIV…PVSG), 150–325 (PVLP…DEAL), and 516–541 (QEAE…PPVP). Positions 1-333 (MAIVQTLPVP…ALLHCVLEGK (333 aa)) are required for centrosomal localization. Positions 172-181 (PSGSQGSLTQ) are enriched in polar residues. A compositionally biased stretch (low complexity) spans 187-198 (ASSSSSSSSSAA). Over residues 212 to 232 (PSGTLSDSGRNSLSSLPTYST) the composition is skewed to polar residues. Residues 241–282 (SPGGHLPSHGPGRGALPGPARGAPTGPSHSDSGRSSSSKSTG) are compositionally biased toward low complexity. Phosphoserine is present on serine 248. Gly residues predominate over residues 283-294 (SLGGRLAGGLLG). Serine 295 carries the phosphoserine modification. The segment covering 310 to 321 (SPPPPPPPPPPS) has biased composition (pro residues). Residues 329–647 (VLEGKLRDRE…LELEARELAD (319 aa)) adopt a coiled-coil conformation. The tract at residues 445-667 (SGEISLLKQQ…CLEEITATEI (223 aa)) is sufficient for interaction with CTNNB1. Residues 448-667 (ISLLKQQLKE…CLEEITATEI (220 aa)) are sufficient for interaction with KATNB1 and for inhibition of katanin-mediated microtubule severing. The span at 516-526 (QEAERLREKAG) shows a compositional bias: basic and acidic residues. Phosphoserine is present on serine 568. The Nuclear export signal motif lies at 629 to 638 (LEQELQQLSL).

The protein belongs to the LZTS2 family. Interacts with KATNB1. Also interacts with CTNNB1, gamma-tubulin and KIF23.

Its subcellular location is the cytoplasm. The protein localises to the cytoskeleton. It is found in the microtubule organizing center. The protein resides in the centrosome. Its function is as follows. Negative regulator of katanin-mediated microtubule severing and release from the centrosome. Required for central spindle formation and the completion of cytokinesis. May negatively regulate axonal outgrowth by preventing the formation of microtubule bundles that are necessary for transport within the elongating axon. Negative regulator of the Wnt signaling pathway. Represses beta-catenin-mediated transcriptional activation by promoting the nuclear exclusion of beta-catenin. The protein is Leucine zipper putative tumor suppressor 2 of Bos taurus (Bovine).